The sequence spans 479 residues: Mannose-1-phosphate guanylyltransferase RfbM (479 aa).

The protein belongs to the mannose-6-phosphate isomerase type 2 family. As to quaternary structure, homodimer.

The enzyme catalyses alpha-D-mannose 1-phosphate + GTP + H(+) = GDP-alpha-D-mannose + diphosphate. The protein operates within nucleotide-sugar biosynthesis; GDP-alpha-D-mannose biosynthesis; GDP-alpha-D-mannose from alpha-D-mannose 1-phosphate (GTP route): step 1/1. Its pathway is bacterial outer membrane biogenesis; LPS O-antigen biosynthesis. Involved in GDP-mannose biosynthesis which serves as the activated sugar nucleotide precursor for mannose residues in cell surface polysaccharides. This enzyme participates in synthesis of the LPS group B O antigen. This is Mannose-1-phosphate guanylyltransferase RfbM (rfbM) from Salmonella typhimurium (strain LT2 / SGSC1412 / ATCC 700720).